We begin with the raw amino-acid sequence, 1061 residues long: Zinc finger protein ZFPM1 (1061 aa).

The segment at 152–185 (VVNKDVFPCKDCGIWYRSERNLQAHLMYYCASRQ) adopts a CCHC FOG-type 1 zinc-finger fold. Residues cysteine 160, cysteine 163, histidine 176, and cysteine 181 each contribute to the Zn(2+) site. 3 consecutive C2H2-type zinc fingers follow at residues 204-228 (RICP…MRSH), 234-256 (FVCL…LKVH), and 262-285 (GVCH…VTNH). Disordered stretches follow at residues 349-393 (PSAT…SEET) and 435-455 (TEMS…GAAT). The span at 378-388 (SPISSSSSASS) shows a compositional bias: low complexity. The span at 436-448 (EMSSPTPGSSPVP) shows a compositional bias: polar residues. A CCHC FOG-type 2 zinc finger spans residues 508-541 (SAVPKGATCFECEITFNNINNYYVHKRLYCSGRH). Positions 516, 519, 532, and 537 each coordinate Zn(2+). 2 disordered regions span residues 561 to 586 (ALAS…ESSA) and 599 to 630 (MDCE…NRTV). The span at 565–574 (GFSSTEQEAS) shows a compositional bias: polar residues. The CCHC FOG-type 3 zinc-finger motif lies at 623–656 (EEDPNRTVCGACNIRFSRHETYVVHKRYYCASRH). Zn(2+)-binding residues include cysteine 631, cysteine 634, histidine 647, and cysteine 652. Residues 661–681 (RRREVNKPGPPYTTQPTPRTR) are disordered. The tract at residues 736 to 742 (PIDLSKK) is interaction with CTBP. Residues 759 to 792 (APLADYHECTACRISFNSLESYLAHKKFSCPTAP) form a CCHC FOG-type 4 zinc finger. Residues cysteine 767, cysteine 770, histidine 783, and cysteine 788 each coordinate Zn(2+). Residues 869 to 892 (TTCPYCPHNVIIRGDLLEHFRSVH) form a C2H2-type 4 zinc finger. Residues 917–1021 (RGQTSSASEN…MQPPKPSLIS (105 aa)) form a disordered region. Composition is skewed to low complexity over residues 933–942 (VSSASPLQLP) and 954–972 (TTSS…STPR). Residues 973–984 (PLLPTSPAPPSN) show a composition bias toward pro residues. The CCHC FOG-type 5 zinc-finger motif lies at 1023 to 1056 (VPNGNHRYCRLCNIKFSSLSTFIAHKKYYCSSHA). Cysteine 1031, cysteine 1034, histidine 1047, and cysteine 1052 together coordinate Zn(2+).

The protein belongs to the FOG (Friend of GATA) family. As to quaternary structure, interacts with corepressor CTBP. Interacts with the N-terminal zinc-finger of GATA1 and probably GATA2. As to expression, predominantly expressed in heart and brain. Also expressed in ventral blood island and adult spleen.

Its subcellular location is the nucleus. Transcription regulator that plays an central role in red blood cell differentiation. Essential cofactor that acts via the formation of a heterodimer with transcription factors of the GATA family GATA1 and GATA2. Such heterodimer can both activate or repress transcriptional activity, depending on the cell and promoter context. Acts as a repressor of red blood cells, probably by modulating activity of GATA1. The sequence is that of Zinc finger protein ZFPM1 (zfpm1) from Xenopus laevis (African clawed frog).